Consider the following 289-residue polypeptide: Rhodopsin (289 aa).

At 1–7 the chain is on the extracellular side; it reads YLVSPAG. A helical membrane pass occupies residues 8-32; sequence YAALGAYMFLLILVGFPVNFLTLYV. The Cytoplasmic segment spans residues 33–44; it reads TLEHKKLRTPLN. The chain crosses the membrane as a helical span at residues 45 to 67; the sequence is YILLNLAVADLFMVLGGFTTTMY. Over 68–81 the chain is Extracellular; it reads TSMHGYFVLGRLGC. A disulfide bond links Cys81 and Cys158. The chain crosses the membrane as a helical span at residues 82 to 104; the sequence is NLEGFFVTLGGEIALWSLVVLAI. The 'Ionic lock' involved in activated form stabilization signature appears at 105–107; that stretch reads ERW. The Cytoplasmic portion of the chain corresponds to 105–123; it reads ERWIGVFKSIRNFRFTEDH. A helical membrane pass occupies residues 124 to 144; sequence AIMGLGFSWVMAATCAVPPLV. The Extracellular segment spans residues 145 to 173; that stretch reads GWLRYIPEGMQCSCGVDYYTRAEGFNNES. N-linked (GlcNAc...) asparagine glycosylation is present at Asn171. A helical transmembrane segment spans residues 174-195; that stretch reads FVIYMFIVHFLIPLIVIFFCYG. The Cytoplasmic segment spans residues 196–223; the sequence is RLLCAVKEAAAAQQESETTQRAEKEVSR. The chain crosses the membrane as a helical span at residues 224-245; sequence MVVIMVIGYLVCWLPYASVAWW. Topologically, residues 246 to 257 are extracellular; that stretch reads IFCNQGSEFGPI. Residues 258–279 traverse the membrane as a helical segment; the sequence is FMTLPAFFAKSPAIYNPLIYIC. Position 267 is an N6-(retinylidene)lysine (Lys267). Residues 280 to 289 lie on the Cytoplasmic side of the membrane; that stretch reads MNKQFPHCMI.

It belongs to the G-protein coupled receptor 1 family. Opsin subfamily. In terms of processing, phosphorylated on some or all of the serine and threonine residues present in the C-terminal region. Contains one covalently linked retinal chromophore.

It localises to the membrane. The protein resides in the cell projection. The protein localises to the cilium. It is found in the photoreceptor outer segment. Functionally, photoreceptor required for image-forming vision at low light intensity. While most salt water fish species use retinal as chromophore, most freshwater fish use 3-dehydroretinal, or a mixture of retinal and 3-dehydroretinal. Light-induced isomerization of 11-cis to all-trans retinal triggers a conformational change that activates signaling via G-proteins. Subsequent receptor phosphorylation mediates displacement of the bound G-protein alpha subunit by arrestin and terminates signaling. This is Rhodopsin (rho) from Leocottus kesslerii (Kessler's sculpin).